The following is a 728-amino-acid chain: MSDRIDRDVINALIAGHFADPFSVLGMHKTTAGLEVRALLPDATDVWVIEPKTGRKLAKLECLDSRGFFSGVIPRRKNFFRYQLAVVWHGQQNLIDDPYRFGPLIQEMDAWLLSEGTHLRPYETLGAHADTMDGVTGTRFSVWAPNARRVSVVGQFNYWDGRRHPMRLRKESGIWELFIPGAHNGQLYKYEMIDANGNLRLKSDPYAFEAQMRPETASLICGLPEKVVQTEERKKANQFDAPISIYEVHLGSWRRHTDNNFWLSYRELADQLVPYAKWMGFTHLELLPINEHPFDGSWGYQPTGLYAPTRRFGTRDDFRYFIDAAHAAGLNVILDWVPGHFPTDDFALAEFDGTNLYEHSDPREGYHQDWNTLIYNYGRREVSNFLVGNALYWIERFGIDALRVDAVASMIYRDYSRKEGEWIPNEFGGRENLEAIEFLRNTNRILGEQVSGAVTMAEESTDFPGVSRPQDMGGLGFWYKWNLGWMHDTLDYMKLDPIYRQYHHDKLTFGMLYNYTENFVLPLSHDEVVHGKKSILDRMPGDAWQKFANLRAYYGWMWAFPGKKLLFMGNEFAQGREWNHDASLDWHLLEGGDNWHHGVQRLVRDLNLTYRHHKAMHELDFDPYGFEWLVVDDKERSVLIFVRRDKEGNEIIVASNFTPVPRHDYRFGINQPGKWREILNTDSIHYHGSNAGNGGTVHSDEIASHGRQHSLSLTLPPLATIWLVREAE.

Residue Asp405 is the Nucleophile of the active site. The active-site Proton donor is Glu458.

This sequence belongs to the glycosyl hydrolase 13 family. GlgB subfamily. Monomer.

The catalysed reaction is Transfers a segment of a (1-&gt;4)-alpha-D-glucan chain to a primary hydroxy group in a similar glucan chain.. It functions in the pathway glycan biosynthesis; glycogen biosynthesis. Functionally, catalyzes the formation of the alpha-1,6-glucosidic linkages in glycogen by scission of a 1,4-alpha-linked oligosaccharide from growing alpha-1,4-glucan chains and the subsequent attachment of the oligosaccharide to the alpha-1,6 position. The chain is 1,4-alpha-glucan branching enzyme GlgB from Shigella flexneri.